The following is a 707-amino-acid chain: Transcription termination factor Rho (707 aa).

2 disordered regions span residues 1–38 (MSDTTDLMGARVEETAAAPATDASAPATGAGSRRRRGT) and 76–321 (QAAG…DEIQ). 2 stretches are compositionally biased toward low complexity: residues 16-31 (AAAPATDASAPATGAG) and 76-93 (QAAGGAPAKAAPAAADTA). The segment covering 107–132 (RTGDEAPAEKAEKAGKADKKADKAAA) has biased composition (basic and acidic residues). Residues 153 to 163 (ASAEQAAPADD) are compositionally biased toward low complexity. Residues 176-188 (DAGSPSATDTTVA) are compositionally biased toward polar residues. Over residues 203 to 213 (QQSQGHQQGQG) the composition is skewed to low complexity. Residues 215-265 (ARSDAEGGDGRRRDRRDRGDRDRGDRGDRGDRGDRGDRGERGRDRRNKGDD) are compositionally biased toward basic and acidic residues. A compositionally biased stretch (basic residues) spans 301-315 (RRGRRGRYRDRRGRR). A Rho RNA-BD domain is found at 331–406 (LIPVAGILDI…VRLDSVNGMA (76 aa)). Residues 449–454 (GKGQRG), 461–466 (KTGKTM), and Arg-492 contribute to the ATP site.

It belongs to the Rho family. Homohexamer. The homohexamer assembles into an open ring structure.

Its function is as follows. Facilitates transcription termination by a mechanism that involves Rho binding to the nascent RNA, activation of Rho's RNA-dependent ATPase activity, and release of the mRNA from the DNA template. The protein is Transcription termination factor Rho of Streptomyces lividans.